We begin with the raw amino-acid sequence, 517 residues long: MISVALIILFLAKVISGKSDDFISVNPETNMLIDGYGRERFFHGTNVVVKHFPFHPETTGFNKDTFSEDDMKILQKFGLNSIRLGMMLPGYVPKREEYNETYIKVIQSIVTTAAKYGIYTLLDMHQDVFSPKFCVEGMPDWIVNTQGAKDFPMPLHKPFNLDPKTGYPYPEDCAKFSWADYYFTEAAGQAFQNLYDNVDGLRDEWAQFWKKTADVFKEEPSVIGYELINEPFCGNVFKHPTLLIPGVADYLNLQPTYDALQKAIRQVDEEHNIFFEGVTWDFFEVGFTEVPGGKQYQNRSVLSYHYYEPPDFSKKLNFEARLLDLKRLKCGGFLTEMFTVGTDFNSMFEMFDLCDKFKQSWHGWMYKSYGCIEQNLGCLNMSSPGKESIQIANTSRTYPQAVAGRTQSYAFDIKTKVFTLVYETVGSCKSGRTIVYFNKNLHYPNGYRYEINPNFKVTPSENEYFLYLDEVNKVPNTVVTFKLFPLSFTDSEDIHPVTVMGDKHLSENHNENEKKKK.

The signal sequence occupies residues 1-17; sequence MISVALIILFLAKVISG. N99 is a glycosylation site (N-linked (GlcNAc...) asparagine). E230 functions as the Proton donor in the catalytic mechanism. N-linked (GlcNAc...) asparagine glycans are attached at residues N298, N380, and N393.

Belongs to the glycosyl hydrolase 5 (cellulase A) family. As to expression, expressed uniformly in digestive cells, tentacles and peduncle regions suggesting expression in the endoderm throughout the whole body (at protein level).

The protein localises to the secreted. It catalyses the reaction an oligoglycosyl-(1-&gt;4)-beta-D-glucosyl-(1&lt;-&gt;1)-ceramide + H2O = an oligoglycosyl-(1-&gt;4)-D-glucose + an N-acyl-sphingoid base. Cu(2+), zinc, manganese, calcium, magnesium and EDTA have no significant effects on enzyme activity. Enzyme requires presence of detergents such as Triton X-100 and Lubrol PX for the hydrolysis of glycosphingolipids. Taurodeoxycholate strongly inhibits the enzyme activity. In terms of biological role, hydrolysis of the glycosidic linkage between oligosaccharides and ceramides of glycosphingolipids, optimal substrates appear to be the glycosphingolipids with a gangliotetraose structure. This is Endoglycoceramidase from Hydra vulgaris (Hydra).